A 296-amino-acid chain; its full sequence is MIIHPNFDPVAIHLGPLAVRWYGLMYLVGFILAIVVGRLRLKLPHVAAQGWSAKDIDDMMFYGVLGVVLGGRLGYVLFYKAGYYFSHPLDIFRVWEGGMSFHGGFLGVTLAMALFAWQRKRHWLEVTDFVAPMVPTGLAAGRLGNFINGELWGRVTSPDAPWAMLFPGASRDDAAWLAAHQDIAAKWNLNEVFLSHQMLPRHPSQLYEIALEGIALFFVLWFFSRKPRPMGAISALFLIGYGAARFTVEFAREPDDFLGLLTFGLSMGQWLSLPMIVAGVLMMIWAYRRGGVAKQA.

The next 3 membrane-spanning stretches (helical) occupy residues 17-37, 59-79, and 97-117; these read LAVR…IVVG, MMFY…VLFY, and GGMS…LFAW. Arg-142 serves as a coordination point for a 1,2-diacyl-sn-glycero-3-phospho-(1'-sn-glycerol). 2 consecutive transmembrane segments (helical) span residues 230-250 and 265-285; these read MGAI…TVEF and LSMG…MMIW.

The protein belongs to the Lgt family.

The protein localises to the cell inner membrane. It catalyses the reaction L-cysteinyl-[prolipoprotein] + a 1,2-diacyl-sn-glycero-3-phospho-(1'-sn-glycerol) = an S-1,2-diacyl-sn-glyceryl-L-cysteinyl-[prolipoprotein] + sn-glycerol 1-phosphate + H(+). Its pathway is protein modification; lipoprotein biosynthesis (diacylglyceryl transfer). Catalyzes the transfer of the diacylglyceryl group from phosphatidylglycerol to the sulfhydryl group of the N-terminal cysteine of a prolipoprotein, the first step in the formation of mature lipoproteins. This chain is Phosphatidylglycerol--prolipoprotein diacylglyceryl transferase, found in Burkholderia mallei (strain NCTC 10247).